A 131-amino-acid polypeptide reads, in one-letter code: Profilin-4 (131 aa).

The cysteines at positions 13 and 115 are disulfide-linked. An Involved in PIP2 interaction motif is present at residues 81–97; sequence AVIRGKKGAGGITVKKT. At Thr111 the chain carries Phosphothreonine.

This sequence belongs to the profilin family. In terms of assembly, occurs in many kinds of cells as a complex with monomeric actin in a 1:1 ratio. In terms of processing, phosphorylated by MAP kinases.

It is found in the cytoplasm. Its subcellular location is the cytoskeleton. Binds to actin and affects the structure of the cytoskeleton. At high concentrations, profilin prevents the polymerization of actin, whereas it enhances it at low concentrations. This chain is Profilin-4, found in Olea europaea (Common olive).